Consider the following 339-residue polypeptide: Mycothiol acetyltransferase (339 aa).

N-acetyltransferase domains lie at 8-174 and 176-339; these read YEQL…QGLT and LTYP…GELN. Position 39 (Glu-39) interacts with 1D-myo-inositol 2-(L-cysteinylamino)-2-deoxy-alpha-D-glucopyranoside. 85–87 contacts acetyl-CoA; that stretch reads LAV. Glu-207, Lys-254, and Glu-270 together coordinate 1D-myo-inositol 2-(L-cysteinylamino)-2-deoxy-alpha-D-glucopyranoside. Residue 274–276 coordinates acetyl-CoA; the sequence is VCL. Tyr-308 contributes to the 1D-myo-inositol 2-(L-cysteinylamino)-2-deoxy-alpha-D-glucopyranoside binding site.

The protein belongs to the acetyltransferase family. MshD subfamily. Monomer.

It carries out the reaction 1D-myo-inositol 2-(L-cysteinylamino)-2-deoxy-alpha-D-glucopyranoside + acetyl-CoA = mycothiol + CoA + H(+). Functionally, catalyzes the transfer of acetyl from acetyl-CoA to desacetylmycothiol (Cys-GlcN-Ins) to form mycothiol. The polypeptide is Mycothiol acetyltransferase (Corynebacterium urealyticum (strain ATCC 43042 / DSM 7109)).